Here is a 430-residue protein sequence, read N- to C-terminus: UPF0597 protein Clos_2050 (430 aa).

This sequence belongs to the UPF0597 family.

In Alkaliphilus oremlandii (strain OhILAs) (Clostridium oremlandii (strain OhILAs)), this protein is UPF0597 protein Clos_2050.